Reading from the N-terminus, the 286-residue chain is Beta-lactamase SHV-34 (286 aa).

Positions 1–21 (MRYFRLCIISLLATLPLAVHA) are cleaved as a signal peptide. S66 (acyl-ester intermediate) is an active-site residue. A disulfide bridge links C73 with C119. The active-site Proton acceptor is E164. 230–232 (KTG) lines the substrate pocket.

The protein belongs to the class-A beta-lactamase family.

The catalysed reaction is a beta-lactam + H2O = a substituted beta-amino acid. Its function is as follows. Hydrolyzes ceftazidime and cefotaxime. The chain is Beta-lactamase SHV-34 (bla) from Escherichia coli.